A 547-amino-acid polypeptide reads, in one-letter code: uncharacterized protein (547 aa).

Polar residues predominate over residues 1–18 (MEYHPSSQSPQVNPGMES). Disordered stretches follow at residues 1–41 (MEYH…LQHP) and 80–165 (PSYP…VKRQ). Low complexity-rich tracts occupy residues 19–29 (QQGGYTYTYQQ) and 83–94 (PQSSSAPSNNSY). Over residues 121–135 (VPSPSPIEMVPPSPP) the composition is skewed to pro residues. Over residues 136–160 (KTGSNNSAPVTGKTVQSGNALNNSG) the composition is skewed to polar residues. Residues 174–201 (CLTCRKRRIKCDERKPICYNCIKSKRQC) constitute a DNA-binding region (zn(2)-C6 fungal-type).

It is found in the nucleus. This is an uncharacterized protein from Schizosaccharomyces pombe (strain 972 / ATCC 24843) (Fission yeast).